The primary structure comprises 207 residues: Large ribosomal subunit protein bL25 (207 aa).

Positions 1 to 20 (MANHQIKAQRRKDEGKGASR) are disordered.

It belongs to the bacterial ribosomal protein bL25 family. CTC subfamily. Part of the 50S ribosomal subunit; part of the 5S rRNA/L5/L18/L25 subcomplex. Contacts the 5S rRNA. Binds to the 5S rRNA independently of L5 and L18.

Functionally, this is one of the proteins that binds to the 5S RNA in the ribosome where it forms part of the central protuberance. In Xylella fastidiosa (strain M23), this protein is Large ribosomal subunit protein bL25.